Consider the following 2102-residue polypeptide: Mediator of RNA polymerase II transcription subunit 13-like (2102 aa).

Disordered regions lie at residues 304 to 335 (SYAG…EEAQ), 432 to 487 (QRAC…QPSL), 514 to 587 (VTSS…LDPL), 689 to 758 (SSAV…TTSL), 776 to 819 (NSDE…DLHQ), and 947 to 1034 (SVVE…SSVE). Pro residues predominate over residues 439-450 (GHPPSAGQPPQP). Positions 455–467 (KMAEKLEKGDKQQ) are enriched in basic and acidic residues. A compositionally biased stretch (acidic residues) spans 693-714 (CDEDPEQESDPYAFEEGDEEFN). Composition is skewed to basic and acidic residues over residues 715 to 737 (FSDK…REDG) and 794 to 804 (AEEKFGGKEPK). A compositionally biased stretch (polar residues) spans 947–974 (SVVEQEQSCTPQTHNTFMSNSAPPSNSG). The segment covering 979-990 (PSPATPRISAPT) has biased composition (low complexity). Positions 1015 to 1029 (SDLNSPASTPSTCRP) are enriched in polar residues. 2 short sequence motifs (LXXLL motif) span residues 1165–1169 (LMLLL) and 1254–1258 (LRMLL). Disordered regions lie at residues 1451-1574 (LTQR…DGDS) and 1948-1983 (NSPT…HDES). Low complexity-rich tracts occupy residues 1458–1467 (SSSQTSSSSS), 1476–1502 (TPTT…SSSS), and 1522–1538 (GAQG…QSAG). The segment covering 1542 to 1552 (DATSATSQPQV) has biased composition (polar residues). A compositionally biased stretch (basic and acidic residues) spans 1973 to 1983 (GTDRMESHDES).

This sequence belongs to the Mediator complex subunit 13 family. In terms of assembly, component of the Mediator complex.

It localises to the nucleus. Functionally, component of the Mediator complex, a coactivator involved in regulated gene transcription of nearly all RNA polymerase II-dependent genes. Mediator functions as a bridge to convey information from gene-specific regulatory proteins to the basal RNA polymerase II transcription machinery. Mediator is recruited to promoters by direct interactions with regulatory proteins and serves as a scaffold for the assembly of a functional preinitiation complex with RNA polymerase II and the general transcription factors. The polypeptide is Mediator of RNA polymerase II transcription subunit 13-like (Danio rerio (Zebrafish)).